Consider the following 240-residue polypeptide: Bactofilin BacP (240 aa).

The tract at residues 116 to 240 (DVEPGRLPAE…KKVVVKKKTR (125 aa)) is interacts with PadC. Residues 117–240 (VEPGRLPAER…KKVVVKKKTR (124 aa)) form a disordered region. Residues 126–150 (RPAVVRPTAVTRPTATPARPTIPAA) are compositionally biased toward low complexity. Positions 151–173 (RPMPPPPPSRPTPPPPPARPSAP) are enriched in pro residues. Positions 229–240 (AKKKVVVKKKTR) are enriched in basic residues.

This sequence belongs to the bactofilin family. In terms of assembly, interacts with BacN and probably also BacO, the 3 proteins colocalize as an extended structure. Interacts with PadC.

It localises to the cytoplasm. It is found in the cytoskeleton. Functionally, a non-essential component of the chromosome segregation machinery. Positions the ParA-ParB-parS chromosome segregation machinery within the cell; BacP seems to be the most important bactofilin in this process. Forms a heteropolymeric, subpolar scaffold in the cell; BacP probably forms the core, BacO contributes to position and integrity while BacN does not seem to contribute to assembly. The chain is Bactofilin BacP from Myxococcus xanthus (strain DK1622).